The following is a 226-amino-acid chain: Ribonuclease 3 (226 aa).

Residues 6–128 form the RNase III domain; that stretch reads INRLQRKLGY…LIGGIFLDSD (123 aa). Residue E41 coordinates Mg(2+). The active site involves D45. Positions 114 and 117 each coordinate Mg(2+). E117 is an active-site residue. The DRBM domain occupies 155-225; that stretch reads DPKTRLQEFL…AEQALKKLEL (71 aa).

This sequence belongs to the ribonuclease III family. As to quaternary structure, homodimer. Requires Mg(2+) as cofactor.

The protein resides in the cytoplasm. The enzyme catalyses Endonucleolytic cleavage to 5'-phosphomonoester.. Its function is as follows. Digests double-stranded RNA. Involved in the processing of primary rRNA transcript to yield the immediate precursors to the large and small rRNAs (23S and 16S). Processes some mRNAs, and tRNAs when they are encoded in the rRNA operon. Processes pre-crRNA and tracrRNA of type II CRISPR loci if present in the organism. The chain is Ribonuclease 3 from Pectobacterium carotovorum subsp. carotovorum (strain PC1).